Reading from the N-terminus, the 162-residue chain is NADH-quinone oxidoreductase subunit I (162 aa).

4Fe-4S ferredoxin-type domains lie at Leu52 to Gly82 and Thr93 to Asn122. [4Fe-4S] cluster-binding residues include Cys62, Cys65, Cys68, Cys72, Cys102, Cys105, Cys108, and Cys112.

The protein belongs to the complex I 23 kDa subunit family. As to quaternary structure, NDH-1 is composed of 14 different subunits. Subunits NuoA, H, J, K, L, M, N constitute the membrane sector of the complex. [4Fe-4S] cluster is required as a cofactor.

It is found in the cell inner membrane. It carries out the reaction a quinone + NADH + 5 H(+)(in) = a quinol + NAD(+) + 4 H(+)(out). Functionally, NDH-1 shuttles electrons from NADH, via FMN and iron-sulfur (Fe-S) centers, to quinones in the respiratory chain. The immediate electron acceptor for the enzyme in this species is believed to be ubiquinone. Couples the redox reaction to proton translocation (for every two electrons transferred, four hydrogen ions are translocated across the cytoplasmic membrane), and thus conserves the redox energy in a proton gradient. This is NADH-quinone oxidoreductase subunit I from Methylobacterium nodulans (strain LMG 21967 / CNCM I-2342 / ORS 2060).